Here is a 703-residue protein sequence, read N- to C-terminus: DnaJ homolog subfamily C member 14 (703 aa).

Disordered stretches follow at residues 1 to 150 (MAQK…DGSS) and 164 to 229 (EDEE…RKRS). A compositionally biased stretch (low complexity) spans 17 to 28 (SGGSSLITSGSS). Pro residues predominate over residues 75–84 (HGPPRGPGPP). 2 stretches are compositionally biased toward acidic residues: residues 89 to 102 (YPDE…ESGV) and 164 to 176 (EDEE…DDEE). Positions 193-202 (PPSRRQRHRF) are enriched in basic residues. Basic and acidic residues predominate over residues 203–218 (LTKEDVRDSGRRDPKA). Over residues 219–228 (PGRHRLARKR) the composition is skewed to basic residues. 3 consecutive transmembrane segments (helical) span residues 254–274 (WWLI…GYLI), 305–325 (VMFQ…IRLL), and 327–347 (VVGA…QLGW). Residues 444–508 (NPFHVLGVEA…ERRKEYEMKR (65 aa)) form the J domain. Disordered regions lie at residues 622–643 (FGSR…PPAD) and 659–703 (MSNG…PFQR). A compositionally biased stretch (polar residues) spans 673 to 684 (GTTSTSRPNSSV). Basic residues predominate over residues 691–703 (PKRRKKVRRPFQR).

As to quaternary structure, interacts with the FxxxFxxxF motif of DRD1 via its C-terminal domain. As to expression, detected in heart, brain, lung, liver, skeletal muscle, kidney and testis.

The protein resides in the endoplasmic reticulum membrane. In terms of biological role, regulates the export of target proteins, such as DRD1, from the endoplasmic reticulum to the cell surface. The protein is DnaJ homolog subfamily C member 14 (Dnajc14) of Rattus norvegicus (Rat).